The sequence spans 184 residues: Female-specific protein transformer (184 aa).

Composition is skewed to basic and acidic residues over residues 1–39 (MKMDADSSGTEHRDSRGSRSRSWREREHHGRTSERDSRK) and 49–58 (DEVREQDRIR). Disordered stretches follow at residues 1–123 (MKMD…PKII) and 146–184 (YQRLPRPPPFPPAPFRYRQRQPFMGAPRFGYRNAGRPPY). Composition is skewed to basic residues over residues 59–75 (SLRQRAHQSTRRTRSRS) and 84–114 (SRHRRHRQRSRSRNRSRSRSSERRRRQRSPH). The span at 150 to 159 (PRPPPFPPAP) shows a compositional bias: pro residues.

The protein localises to the nucleus speckle. Its function is as follows. Member of the regulatory pathway controlling female somatic sexual differentiation, regulated by Sxl. Activates dsx female-specific splicing by promoting the formation of a splicing enhancer complex which consists of tra, tra2 and sr proteins. The sequence is that of Female-specific protein transformer (tra) from Drosophila simulans (Fruit fly).